Reading from the N-terminus, the 575-residue chain is Lysine--tRNA ligase (575 aa).

Mg(2+) contacts are provided by glutamate 412 and glutamate 419.

The protein belongs to the class-II aminoacyl-tRNA synthetase family. As to quaternary structure, homodimer. Mg(2+) is required as a cofactor.

The protein localises to the cytoplasm. The catalysed reaction is tRNA(Lys) + L-lysine + ATP = L-lysyl-tRNA(Lys) + AMP + diphosphate. This Bacteroides fragilis (strain ATCC 25285 / DSM 2151 / CCUG 4856 / JCM 11019 / LMG 10263 / NCTC 9343 / Onslow / VPI 2553 / EN-2) protein is Lysine--tRNA ligase.